The sequence spans 337 residues: tRNA N6-adenosine threonylcarbamoyltransferase (337 aa).

Fe cation contacts are provided by His-111 and His-115. Residues 134–138 (LVSGG), Asp-167, Gly-180, and Asn-272 each bind substrate. Asp-300 provides a ligand contact to Fe cation.

This sequence belongs to the KAE1 / TsaD family. Fe(2+) is required as a cofactor.

It localises to the cytoplasm. The enzyme catalyses L-threonylcarbamoyladenylate + adenosine(37) in tRNA = N(6)-L-threonylcarbamoyladenosine(37) in tRNA + AMP + H(+). Required for the formation of a threonylcarbamoyl group on adenosine at position 37 (t(6)A37) in tRNAs that read codons beginning with adenine. Is involved in the transfer of the threonylcarbamoyl moiety of threonylcarbamoyl-AMP (TC-AMP) to the N6 group of A37, together with TsaE and TsaB. TsaD likely plays a direct catalytic role in this reaction. This chain is tRNA N6-adenosine threonylcarbamoyltransferase, found in Salmonella schwarzengrund (strain CVM19633).